Here is a 63-residue protein sequence, read N- to C-terminus: Large ribosomal subunit protein uL29 (63 aa).

Belongs to the universal ribosomal protein uL29 family.

In Aliivibrio fischeri (strain ATCC 700601 / ES114) (Vibrio fischeri), this protein is Large ribosomal subunit protein uL29.